The sequence spans 348 residues: Succinylglutamate desuccinylase (348 aa).

Residues His67, Glu70, and His164 each contribute to the Zn(2+) site. Glu228 is a catalytic residue.

Belongs to the AspA/AstE family. Succinylglutamate desuccinylase subfamily. It depends on Zn(2+) as a cofactor.

It catalyses the reaction N-succinyl-L-glutamate + H2O = L-glutamate + succinate. The protein operates within amino-acid degradation; L-arginine degradation via AST pathway; L-glutamate and succinate from L-arginine: step 5/5. In terms of biological role, transforms N(2)-succinylglutamate into succinate and glutamate. The protein is Succinylglutamate desuccinylase of Shewanella denitrificans (strain OS217 / ATCC BAA-1090 / DSM 15013).